Reading from the N-terminus, the 856-residue chain is Alanine/arginine aminopeptidase (856 aa).

Residues glutamate 132 and 264 to 268 (GAMEN) each bind substrate. Position 300 (histidine 300) interacts with Zn(2+). Catalysis depends on glutamate 301, which acts as the Proton acceptor. Zn(2+)-binding residues include histidine 304 and glutamate 323.

The protein belongs to the peptidase M1 family. The cofactor is Zn(2+).

In terms of biological role, positive effector of glycogen accumulation. May be involved in nutrient-sensing. This is Alanine/arginine aminopeptidase (AAP1) from Saccharomyces cerevisiae (strain ATCC 204508 / S288c) (Baker's yeast).